A 209-amino-acid chain; its full sequence is Guanylate kinase (209 aa).

One can recognise a Guanylate kinase-like domain in the interval 5 to 184; sequence GLLIVFSGPS…AAERVKRVIE (180 aa). Position 12-19 (12-19) interacts with ATP; it reads GPSGVGKG.

The protein belongs to the guanylate kinase family.

It is found in the cytoplasm. The catalysed reaction is GMP + ATP = GDP + ADP. Its function is as follows. Essential for recycling GMP and indirectly, cGMP. This is Guanylate kinase from Streptococcus thermophilus (strain CNRZ 1066).